We begin with the raw amino-acid sequence, 125 residues long: Small ribosomal subunit protein bS6 (125 aa).

The interval 100-125 (SPMVKAREERKPLTEVENNDFEDAEE) is disordered. The segment covering 104–113 (KAREERKPLT) has biased composition (basic and acidic residues). A compositionally biased stretch (acidic residues) spans 116-125 (ENNDFEDAEE).

It belongs to the bacterial ribosomal protein bS6 family.

Functionally, binds together with bS18 to 16S ribosomal RNA. This Histophilus somni (strain 129Pt) (Haemophilus somnus) protein is Small ribosomal subunit protein bS6.